The primary structure comprises 434 residues: MNLFLAGLDHTTAPVEIREQLAFSQTDLPSALMQLTSSETGTPPLFAEAVILSTCNRVELYGVTNPGTTAQHVVDFLAAFHRRPAASFVHTLYFYQGEAVARHLCATAAGLRSLVLGEAQIQGQVRNAYEAAQRIGSVGSILHRLFQIALVAGKRVRHETTIGKGAASVSQAGVELARRRLGDLRGREVLLIGGGEVSELAAQNLIANGADRLTIVNRTSARAAALAERYGAEMLDFGALPQALARADIVISSTAAPVPIIYRHHVAEAIAHKQRARACGECDPPTMLLIDLAVPRDIAADVAQIPGVHLFTVDDLREVVSHTIELRSAVLEIAQQIVEEQVQEFLSWMRTQEALPVLTMLRQRAEEVRNEELARALRRLHDLSPEQRAVIEGLSRSIVNKLLHLPTRCLREAAAHGQGKRYASILAELFNLEH.

Substrate-binding positions include 54–57 (TCNR), Ser-113, 118–120 (EAQ), and Gln-124. The active-site Nucleophile is the Cys-55. 193–198 (GGGEVS) serves as a coordination point for NADP(+).

It belongs to the glutamyl-tRNA reductase family. As to quaternary structure, homodimer.

The enzyme catalyses (S)-4-amino-5-oxopentanoate + tRNA(Glu) + NADP(+) = L-glutamyl-tRNA(Glu) + NADPH + H(+). Its pathway is porphyrin-containing compound metabolism; protoporphyrin-IX biosynthesis; 5-aminolevulinate from L-glutamyl-tRNA(Glu): step 1/2. It functions in the pathway porphyrin-containing compound metabolism; chlorophyll biosynthesis. Catalyzes the NADPH-dependent reduction of glutamyl-tRNA(Glu) to glutamate 1-semialdehyde (GSA). This chain is Glutamyl-tRNA reductase, found in Chloroflexus aurantiacus (strain ATCC 29366 / DSM 635 / J-10-fl).